The sequence spans 269 residues: uncharacterized protein (269 aa).

This is an uncharacterized protein from Acanthamoeba polyphaga (Amoeba).